The chain runs to 328 residues: Phosphate acyltransferase (328 aa).

The protein belongs to the PlsX family. Homodimer. Probably interacts with PlsY.

It is found in the cytoplasm. It carries out the reaction a fatty acyl-[ACP] + phosphate = an acyl phosphate + holo-[ACP]. It functions in the pathway lipid metabolism; phospholipid metabolism. Its function is as follows. Catalyzes the reversible formation of acyl-phosphate (acyl-PO(4)) from acyl-[acyl-carrier-protein] (acyl-ACP). This enzyme utilizes acyl-ACP as fatty acyl donor, but not acyl-CoA. The polypeptide is Phosphate acyltransferase (Mycoplasmoides gallisepticum (strain R(low / passage 15 / clone 2)) (Mycoplasma gallisepticum)).